A 334-amino-acid polypeptide reads, in one-letter code: Transcription factor TGA2.1 (334 aa).

Polar residues predominate over residues 1–13 (MADASSRTDTSIV). A disordered region spans residues 1-49 (MADASSRTDTSIVVDNDDKNHQLENGHSGAVMASNSSDRSDRSDKLMDQ). Basic and acidic residues predominate over residues 38–49 (DRSDRSDKLMDQ). Residues 48–92 (DQKTIRRLAQNREAARKSRLRKKAYVQQLESSKLKLAQLEQELQK) enclose the bZIP domain. The tract at residues 50–70 (KTIRRLAQNREAARKSRLRKK) is basic motif. The interval 76 to 90 (LESSKLKLAQLEQEL) is leucine-zipper. The DOG1 domain maps to 115–331 (ALTFDLEYTR…RALSSLWLAR (217 aa)).

The protein belongs to the bZIP family. As to quaternary structure, interacts with NPR1/NH1 and NPR3/NH3.

It is found in the nucleus. Plays a negative role in rice basal defense responses to the bacterial blight pathogen Xanthomomas oryzae pv. oryzae (Xoo). May function in both positive and negative regulation of rice defense genes. Binds DNA in vitro. Acts as a transcriptional activator when bound to NPR1/NH1 in vitro. Binds to the promoter sequence of CRK10 in vitro. The chain is Transcription factor TGA2.1 from Oryza sativa subsp. japonica (Rice).